A 315-amino-acid chain; its full sequence is tRNA dimethylallyltransferase (315 aa).

13 to 20 is an ATP binding site; that stretch reads GPTASGKT. 15–20 serves as a coordination point for substrate; the sequence is TASGKT. 4 interaction with substrate tRNA regions span residues 38 to 41, 162 to 166, 243 to 248, and 276 to 283; these read DSAL, QRLSR, RCVGYR, and KRQITWLR.

The protein belongs to the IPP transferase family. Monomer. Mg(2+) serves as cofactor.

The enzyme catalyses adenosine(37) in tRNA + dimethylallyl diphosphate = N(6)-dimethylallyladenosine(37) in tRNA + diphosphate. Its function is as follows. Catalyzes the transfer of a dimethylallyl group onto the adenine at position 37 in tRNAs that read codons beginning with uridine, leading to the formation of N6-(dimethylallyl)adenosine (i(6)A). The protein is tRNA dimethylallyltransferase of Vibrio cholerae serotype O1 (strain ATCC 39541 / Classical Ogawa 395 / O395).